A 66-amino-acid polypeptide reads, in one-letter code: Large ribosomal subunit protein bL35 (66 aa).

The span at 1-26 (MPKMKTHRGSAKRFKKTGSGKLKRSH) shows a compositional bias: basic residues. Residues 1-48 (MPKMKTHRGSAKRFKKTGSGKLKRSHAYTSHLFANKSQKQKRKLRKSA) are disordered.

It belongs to the bacterial ribosomal protein bL35 family. Part of the 50S ribosomal subunit.

The chain is Large ribosomal subunit protein bL35 from Bacillus subtilis (strain 168).